The following is a 292-amino-acid chain: MVIKVPATSANLGPGFDALGLSLNLFNIITINESPIFCISLNGEGSQNLNLKKHNMFISIFNEITRKFDTKLPNFRFVFENNIPFSRGLGSSSAVIVGAIASAYKICGIKIDKNKILNEALVYENHPDNIAPAAFGGFVSSVIYKNSVITQKSEIGEDIKAVVVIPDKQMQTRKSRTMLPKNFTIKECVTNLSHAAFLTSCFVKKDYKNLKFGCIDVMHEELRMQNLPELFEVRKIAYENGALMSSLSGSGSSFLNIVYKDDAKNLAKILSAKFPKFTVKILDFDNGGFAFE.

84–94 lines the ATP pocket; it reads PFSRGLGSSSA.

The protein belongs to the GHMP kinase family. Homoserine kinase subfamily.

Its subcellular location is the cytoplasm. It catalyses the reaction L-homoserine + ATP = O-phospho-L-homoserine + ADP + H(+). Its pathway is amino-acid biosynthesis; L-threonine biosynthesis; L-threonine from L-aspartate: step 4/5. Catalyzes the ATP-dependent phosphorylation of L-homoserine to L-homoserine phosphate. This is Homoserine kinase from Campylobacter hominis (strain ATCC BAA-381 / DSM 21671 / CCUG 45161 / LMG 19568 / NCTC 13146 / CH001A).